Consider the following 1797-residue polypeptide: Non-reducing polyketide synthase nscA (1797 aa).

An N-terminal acylcarrier protein transacylase domain (SAT) region spans residues 17 to 256; it reads SDDLKDLFRR…PLPVYDGLCH (240 aa). The 434-residue stretch at 392-825 folds into the Ketosynthase family 3 (KS3) domain; sequence SSKLAIVGMA…GGNTTLLLED (434 aa). Catalysis depends on for beta-ketoacyl synthase activity residues C565, H700, and H743. Residues 931–1251 are malonyl-CoA:ACP transacylase (MAT) domain; it reads FTGQGAYYSG…SLVTLHLAGL (321 aa). Residues 1318–1637 are product template (PT) domain; the sequence is TSLIHQITAE…RLLMDRFFSP (320 aa). The N-terminal hotdog fold stretch occupies residues 1322-1458; it reads HQITAETIES…ATVRFEDPAA (137 aa). In terms of domain architecture, PKS/mFAS DH spans 1322–1632; sequence HQITAETIES…FRRVPRLLMD (311 aa). The active-site Proton acceptor; for dehydratase activity is the H1354. The C-terminal hotdog fold stretch occupies residues 1482 to 1632; the sequence is VEGKASRLSK…FRRVPRLLMD (151 aa). D1543 acts as the Proton donor; for dehydratase activity in catalysis. Positions 1663–1686 are enriched in polar residues; that stretch reads SVPEISAPSPSIVVSDSTANNTLT. Residues 1663-1723 form a disordered region; sequence SVPEISAPSP…PESESAEPLG (61 aa). A compositionally biased stretch (low complexity) spans 1698 to 1709; sequence SSSESSTPKESP. The region spanning 1720–1797 is the Carrier domain; it reads EPLGNTVSQC…EMTAWIEEYC (78 aa). S1757 carries the O-(pantetheine 4'-phosphoryl)serine modification.

It depends on pantetheine 4'-phosphate as a cofactor.

Its pathway is secondary metabolite biosynthesis. Functionally, non-reducing polyketide synthase; part of the gene cluster that mediates the biosynthesis of neosartoricin B, a prenylated anthracenone that probably exhibits T-cell antiproliferative activity, suggestive of a physiological role as an immunosuppressive agent. The non-reducing polyketide synthase nscA probably synthesizes and cyclizes the decaketide backbone. The hydrolase nscB then mediates the product release through hydrolysis followed by spontaneous decarboxylation. The prenyltransferase nscD catalyzes the addition of the dimethylallyl group to the aromatic C5. The FAD-dependent monooxygenase nscC is then responsible for the stereospecific hydroxylation at C2. Neosartoricin B can be converted into two additional compounds neosartoricins C and D. Neosartoricin C is a spirocyclic compound that is cyclized through the attack of C3 hydroxyl on C14, followed by dehydration. On the other hand, neosartoricin D is a further cyclized compound in which attack of C2 on C14 in neosartoricin C results in the formation of the acetal-containing dioxabicyclo-octanone ring. Both of these compounds are novel and possibly represent related metabolites of the gene cluster. The sequence is that of Non-reducing polyketide synthase nscA from Arthroderma gypseum (strain ATCC MYA-4604 / CBS 118893) (Microsporum gypseum).